Here is a 181-residue protein sequence, read N- to C-terminus: UPF0302 protein lin2035 (181 aa).

It belongs to the UPF0302 family.

In Listeria innocua serovar 6a (strain ATCC BAA-680 / CLIP 11262), this protein is UPF0302 protein lin2035.